Here is a 225-residue protein sequence, read N- to C-terminus: GTP cyclohydrolase III (225 aa).

Belongs to the archaeal-type GTP cyclohydrolase family.

The catalysed reaction is GTP + 3 H2O = 2-amino-5-formylamino-6-(5-phospho-D-ribosylamino)pyrimidin-4(3H)-one + 2 phosphate + 2 H(+). Functionally, catalyzes the formation of 2-amino-5-formylamino-6-ribofuranosylamino-4(3H)-pyrimidinone ribonucleotide monophosphate and inorganic phosphate from GTP. Also has an independent pyrophosphate phosphohydrolase activity. This Sulfurisphaera tokodaii (strain DSM 16993 / JCM 10545 / NBRC 100140 / 7) (Sulfolobus tokodaii) protein is GTP cyclohydrolase III.